The sequence spans 230 residues: Membrane protein (230 aa).

The Virion surface segment spans residues 1-24 (MSSPTTPVPVISWTADEAIKFLKE). A helical membrane pass occupies residues 25–45 (WNFSLGIIVLFITIILQFGYT). At 46 to 55 (SRSMFVYVIK) the chain is on the intravirion side. Residues 56–76 (MVILWLMWPLTIILTIFNCVY) traverse the membrane as a helical segment. Residues 77 to 84 (ALNNVYLG) lie on the Virion surface side of the membrane. A helical membrane pass occupies residues 85-105 (FSIVFTIVAIIMWVVYFVNSI). Residues 106–228 (RLFIRTGSWW…SGMDTALLRN (123 aa)) lie on the Intravirion side of the membrane.

This sequence belongs to the betacoronaviruses M protein family. Homomultimer. Interacts with envelope E protein in the budding compartment of the host cell, which is located between endoplasmic reticulum and the Golgi complex. Forms a complex with HE and S proteins. Interacts with nucleocapsid N protein. This interaction probably participates in RNA packaging into the virus.

It localises to the virion membrane. It is found in the host Golgi apparatus membrane. Component of the viral envelope that plays a central role in virus morphogenesis and assembly via its interactions with other viral proteins. The chain is Membrane protein from Porcine hemagglutinating encephalomyelitis virus (strain 67N) (HEV-67N).